Consider the following 253-residue polypeptide: MSGHNKWANIKHRKMAQDAKKSKIFTKLIREIIVAAREGGGNIETNPRLRAAVEKARAENMPKENIERAIKRGTGELEGVDYQEVIYEGYAPGGVAVYIRALTDNKNRTAQELRHLFNKYGGSLAESGSVSWIFERKGVIEIPRDKVKDLEELMMIAIDAGAEDIKDTEDPIQIITTPENLSEVKSKLEEAGYEVEAKVTFIPKNTMKVTGKDAEKVLEFLNALEDMDDVQEVYSNFEMDDKEMEEILSRLEG.

Belongs to the TACO1 family.

It is found in the cytoplasm. In Thermotoga petrophila (strain ATCC BAA-488 / DSM 13995 / JCM 10881 / RKU-1), this protein is Probable transcriptional regulatory protein Tpet_0454.